A 375-amino-acid chain; its full sequence is Probable aminomethyltransferase (375 aa).

This sequence belongs to the GcvT family. As to quaternary structure, the glycine cleavage system is composed of four proteins: P, T, L and H.

The catalysed reaction is N(6)-[(R)-S(8)-aminomethyldihydrolipoyl]-L-lysyl-[protein] + (6S)-5,6,7,8-tetrahydrofolate = N(6)-[(R)-dihydrolipoyl]-L-lysyl-[protein] + (6R)-5,10-methylene-5,6,7,8-tetrahydrofolate + NH4(+). The glycine cleavage system catalyzes the degradation of glycine. The sequence is that of Probable aminomethyltransferase from Aeropyrum pernix (strain ATCC 700893 / DSM 11879 / JCM 9820 / NBRC 100138 / K1).